We begin with the raw amino-acid sequence, 434 residues long: APETALA2-like protein 2 (434 aa).

The disordered stretch occupies residues 1–116 (MLLDLNVESP…KTRRGPRSRS (116 aa)). Residues 12-23 (RSGTSSSSVLNS) show a composition bias toward low complexity. Gly residues predominate over residues 25–38 (DAGGGGGGGGGGGL). Pro residues predominate over residues 72–87 (LPPPPPAAPSPAPAWQ). Residues 104-113 (VAKKTRRGPR) are compositionally biased toward basic residues. The short motif at 106–115 (KKTRRGPRSR) is the Nuclear localization signal element. 2 consecutive DNA-binding regions (AP2/ERF) follow at residues 118 to 174 (QYRG…INFN) and 210 to 267 (KFRG…TNFE). An EAR motif is present at residues 291–295 (LDLRI).

This sequence belongs to the AP2/ERF transcription factor family. AP2 subfamily. May form homodimer. Interacts with TPR2/ASP1. As to expression, highly expressed in developing panicles and in young seedlings. Present at low levels at all developmental stages.

It is found in the nucleus. Probable transcription factor. Involved in spikelet transition. Together with SNB, controls synergistically inflorescence architecture and floral meristem establishment via the regulation of spatio-temporal expression of B- and E-function floral organ identity genes in the lodicules and of spikelet meristem genes. Prevents lemma and palea elongation as well as grain growth. This Oryza sativa subsp. japonica (Rice) protein is APETALA2-like protein 2.